The primary structure comprises 792 residues: Phenylalanine--tRNA ligase beta subunit (792 aa).

The region spanning 39–147 (ARTLEKVVVG…ADAPIGKNIQ (109 aa)) is the tRNA-binding domain. In terms of domain architecture, B5 spans 400 to 475 (PKIPRIILRP…HLYGYDRIPQ (76 aa)). Residues aspartate 453, aspartate 459, glutamate 462, and glutamate 463 each contribute to the Mg(2+) site. Positions 697-791 (SKFPSIRRDI…LERKFNAKLR (95 aa)) constitute an FDX-ACB domain.

Belongs to the phenylalanyl-tRNA synthetase beta subunit family. Type 1 subfamily. Tetramer of two alpha and two beta subunits. It depends on Mg(2+) as a cofactor.

It localises to the cytoplasm. It catalyses the reaction tRNA(Phe) + L-phenylalanine + ATP = L-phenylalanyl-tRNA(Phe) + AMP + diphosphate + H(+). The protein is Phenylalanine--tRNA ligase beta subunit of Coxiella burnetii (strain RSA 493 / Nine Mile phase I).